Here is a 98-residue protein sequence, read N- to C-terminus: Defensin-A (98 aa).

Positions methionine 1 to threonine 18 are cleaved as a signal peptide. The propeptide occupies serine 19–arginine 58. Intrachain disulfides connect cysteine 61–cysteine 88, cysteine 74–cysteine 94, and cysteine 78–cysteine 96.

Belongs to the invertebrate defensin family. Type 1 subfamily.

Its subcellular location is the secreted. In terms of biological role, antibacterial peptide mostly active against Gram-positive bacteria. Has activity against the bacteria Gram-negative E.cloacae beta12. The sequence is that of Defensin-A (DEFA) from Aedes aegypti (Yellowfever mosquito).